The sequence spans 334 residues: Sensor protein BceS (334 aa).

Transmembrane regions (helical) follow at residues 13–33 (ILII…DSAI) and 35–55 (LAPV…FLAV). Positions 121 to 326 (AWIHEIKTPL…TFTLTFPKEN (206 aa)) constitute a Histidine kinase domain. Position 124 is a phosphohistidine; by autocatalysis (His124).

The protein localises to the cell membrane. The enzyme catalyses ATP + protein L-histidine = ADP + protein N-phospho-L-histidine.. Functionally, member of the two-component regulatory system BceS/BceR involved in the regulation of bacitracin resistance. Activates BceR in response to extracellular bacitracin. The polypeptide is Sensor protein BceS (bceS) (Halalkalibacterium halodurans (strain ATCC BAA-125 / DSM 18197 / FERM 7344 / JCM 9153 / C-125) (Bacillus halodurans)).